The primary structure comprises 215 residues: HTH-type transcriptional regulator for conjugative element R391 (215 aa).

Positions 8–61 (LNHALQLTGVTQSELARRIGIKQQSISQICSGKSARSRYTMQIAEALRVNAHWL) constitute an HTH cro/C1-type domain. Positions 19–38 (QSELARRIGIKQQSISQICS) form a DNA-binding region, H-T-H motif.

Its function is as follows. May control the expression of the integrase and inhibit excision of the mobile element R391, and regulate the expression of other genes as well. The chain is HTH-type transcriptional regulator for conjugative element R391 from Providencia rettgeri.